Here is a 166-residue protein sequence, read N- to C-terminus: Large ribosomal subunit protein uL10 (166 aa).

It belongs to the universal ribosomal protein uL10 family. In terms of assembly, part of the ribosomal stalk of the 50S ribosomal subunit. The N-terminus interacts with L11 and the large rRNA to form the base of the stalk. The C-terminus forms an elongated spine to which L12 dimers bind in a sequential fashion forming a multimeric L10(L12)X complex.

Its function is as follows. Forms part of the ribosomal stalk, playing a central role in the interaction of the ribosome with GTP-bound translation factors. The protein is Large ribosomal subunit protein uL10 of Alkaliphilus metalliredigens (strain QYMF).